Reading from the N-terminus, the 264-residue chain is S-adenosylmethionine decarboxylase proenzyme (264 aa).

Catalysis depends on Ser113, which acts as the Schiff-base intermediate with substrate; via pyruvic acid. Ser113 carries the post-translational modification Pyruvic acid (Ser); by autocatalysis. The active-site Proton acceptor; for processing activity is His118. The active-site Proton donor; for catalytic activity is Cys141.

It belongs to the prokaryotic AdoMetDC family. Type 2 subfamily. In terms of assembly, heterooctamer of four alpha and four beta chains arranged as a tetramer of alpha/beta heterodimers. The cofactor is pyruvate. Post-translationally, is synthesized initially as an inactive proenzyme. Formation of the active enzyme involves a self-maturation process in which the active site pyruvoyl group is generated from an internal serine residue via an autocatalytic post-translational modification. Two non-identical subunits are generated from the proenzyme in this reaction, and the pyruvate is formed at the N-terminus of the alpha chain, which is derived from the carboxyl end of the proenzyme. The post-translation cleavage follows an unusual pathway, termed non-hydrolytic serinolysis, in which the side chain hydroxyl group of the serine supplies its oxygen atom to form the C-terminus of the beta chain, while the remainder of the serine residue undergoes an oxidative deamination to produce ammonia and the pyruvoyl group blocking the N-terminus of the alpha chain.

It catalyses the reaction S-adenosyl-L-methionine + H(+) = S-adenosyl 3-(methylsulfanyl)propylamine + CO2. It participates in amine and polyamine biosynthesis; S-adenosylmethioninamine biosynthesis; S-adenosylmethioninamine from S-adenosyl-L-methionine: step 1/1. Catalyzes the decarboxylation of S-adenosylmethionine to S-adenosylmethioninamine (dcAdoMet), the propylamine donor required for the synthesis of the polyamines spermine and spermidine from the diamine putrescine. The sequence is that of S-adenosylmethionine decarboxylase proenzyme from Pseudomonas syringae pv. syringae (strain B728a).